The following is a 285-amino-acid chain: uncharacterized protein (285 aa).

Transmembrane regions (helical) follow at residues 7-29, 49-71, 95-117, 137-156, 232-254, and 259-281; these read FYRLVKNTLLTAFILSLILLTLQ, LVVWNAYYTYFFIPEGVILSTFF, IFLYCSIPFLTFFLISALLSNTL, FFSEVPAGTFVSFGAVVLHA, KVVNYVNVATLPLFFFLSFTVAL, and GGLSYYAFASLFIVVHQLIIFVV.

It is found in the cell membrane. This is an uncharacterized protein from Aquifex aeolicus (strain VF5).